The sequence spans 292 residues: Elongation factor Ts (292 aa).

The interval 80–83 (TDFV) is involved in Mg(2+) ion dislocation from EF-Tu.

The protein belongs to the EF-Ts family.

It is found in the cytoplasm. Its function is as follows. Associates with the EF-Tu.GDP complex and induces the exchange of GDP to GTP. It remains bound to the aminoacyl-tRNA.EF-Tu.GTP complex up to the GTP hydrolysis stage on the ribosome. The sequence is that of Elongation factor Ts from Psychrobacter sp. (strain PRwf-1).